The chain runs to 323 residues: Lipoyl synthase (323 aa).

Residues cysteine 65, cysteine 70, cysteine 76, cysteine 91, cysteine 95, cysteine 98, and serine 304 each coordinate [4Fe-4S] cluster. The Radical SAM core domain maps to 77–293; it reads FNNGTATFMI…KKEALSIGFT (217 aa).

It belongs to the radical SAM superfamily. Lipoyl synthase family. It depends on [4Fe-4S] cluster as a cofactor.

It localises to the cytoplasm. It carries out the reaction [[Fe-S] cluster scaffold protein carrying a second [4Fe-4S](2+) cluster] + N(6)-octanoyl-L-lysyl-[protein] + 2 oxidized [2Fe-2S]-[ferredoxin] + 2 S-adenosyl-L-methionine + 4 H(+) = [[Fe-S] cluster scaffold protein] + N(6)-[(R)-dihydrolipoyl]-L-lysyl-[protein] + 4 Fe(3+) + 2 hydrogen sulfide + 2 5'-deoxyadenosine + 2 L-methionine + 2 reduced [2Fe-2S]-[ferredoxin]. It functions in the pathway protein modification; protein lipoylation via endogenous pathway; protein N(6)-(lipoyl)lysine from octanoyl-[acyl-carrier-protein]: step 2/2. Functionally, catalyzes the radical-mediated insertion of two sulfur atoms into the C-6 and C-8 positions of the octanoyl moiety bound to the lipoyl domains of lipoate-dependent enzymes, thereby converting the octanoylated domains into lipoylated derivatives. The chain is Lipoyl synthase from Buchnera aphidicola subsp. Acyrthosiphon pisum (strain APS) (Acyrthosiphon pisum symbiotic bacterium).